The chain runs to 291 residues: uncharacterized protein (291 aa).

Its function is as follows. Essential for virus function. This is an uncharacterized protein from Sulfolobus spindle-shape virus 1 (SSV1).